The sequence spans 197 residues: Probable GTP-binding protein EngB (197 aa).

Residues 22-195 enclose the EngB-type G domain; it reads QLPELALAGR…WRTILNHLKV (174 aa). GTP is bound by residues 30-37, 57-61, 75-78, 142-145, and 174-176; these read GRSNVGKS, GKTQT, DVPG, TKAD, and FSS. Residues Ser-37 and Thr-59 each contribute to the Mg(2+) site.

It belongs to the TRAFAC class TrmE-Era-EngA-EngB-Septin-like GTPase superfamily. EngB GTPase family. Mg(2+) is required as a cofactor.

Functionally, necessary for normal cell division and for the maintenance of normal septation. This is Probable GTP-binding protein EngB from Shouchella clausii (strain KSM-K16) (Alkalihalobacillus clausii).